Reading from the N-terminus, the 293-residue chain is Large ribosomal subunit protein uL18 (293 aa).

A compositionally biased stretch (basic and acidic residues) spans 247–263 (IRANPAHEKKQPRDGLV). A disordered region spans residues 247-283 (IRANPAHEKKQPRDGLVKKRWNRAKMSLKQKRDRVKQ). Basic residues predominate over residues 264–283 (KKRWNRAKMSLKQKRDRVKQ).

The protein belongs to the universal ribosomal protein uL18 family. As to quaternary structure, component of the large ribosomal subunit (LSU).

The protein localises to the cytoplasm. It is found in the nucleus. In terms of biological role, component of the ribosome, a large ribonucleoprotein complex responsible for the synthesis of proteins in the cell. The small ribosomal subunit (SSU) binds messenger RNAs (mRNAs) and translates the encoded message by selecting cognate aminoacyl-transfer RNA (tRNA) molecules. The large subunit (LSU) contains the ribosomal catalytic site termed the peptidyl transferase center (PTC), which catalyzes the formation of peptide bonds, thereby polymerizing the amino acids delivered by tRNAs into a polypeptide chain. The nascent polypeptides leave the ribosome through a tunnel in the LSU and interact with protein factors that function in enzymatic processing, targeting, and the membrane insertion of nascent chains at the exit of the ribosomal tunnel. The sequence is that of Large ribosomal subunit protein uL18 (RPL5) from Suberites domuncula (Sponge).